The sequence spans 146 residues: Hemoglobin subunit beta (146 aa).

Residues 2–146 (EWTQQERSII…VVFALGRKYH (145 aa)) form the Globin domain. Residues His63 and His92 each coordinate heme b.

The protein belongs to the globin family. As to quaternary structure, heterotetramer of two alpha chains and two beta chains. As to expression, red blood cells.

Its function is as follows. Involved in oxygen transport from gills to the various peripheral tissues. This is Hemoglobin subunit beta (hbb) from Thunnus thynnus (Atlantic bluefin tuna).